The primary structure comprises 671 residues: UvrABC system protein C (671 aa).

The GIY-YIG domain occupies Thr-16–Val-95. The UVR domain occupies Lys-207–Val-242.

The protein belongs to the UvrC family. As to quaternary structure, interacts with UvrB in an incision complex.

The protein resides in the cytoplasm. The UvrABC repair system catalyzes the recognition and processing of DNA lesions. UvrC both incises the 5' and 3' sides of the lesion. The N-terminal half is responsible for the 3' incision and the C-terminal half is responsible for the 5' incision. In Paenarthrobacter aurescens (strain TC1), this protein is UvrABC system protein C.